A 341-amino-acid chain; its full sequence is Syntaxin-122 (341 aa).

At Met-1 the chain carries N-acetylmethionine. Disordered stretches follow at residues 1 to 22 (MNDL…PPHS) and 111 to 137 (LDRA…RTSV). Topologically, residues 1 to 284 (MNDLLSGSFK…ARFYQKNTRK (284 aa)) are cytoplasmic. Polar residues-rich tracts occupy residues 8–21 (SFKT…SPPH) and 126–137 (PGSSSDRQRTSV). Residues 64 to 185 (CHNLRSSNEQ…GEYPDEATLE (122 aa)) are a coiled coil. In terms of domain architecture, t-SNARE coiled-coil homology spans 213 to 275 (INEIQERHDA…RSGADRLVKA (63 aa)). A helical; Anchor for type IV membrane protein transmembrane segment spans residues 285 to 305 (WTCFAILLLLIIVVLIVVFTV). The Vesicular segment spans residues 306-341 (KPWESNGGGGGGAPRQATPVQAQPPPPPAVNRRLLR). A disordered region spans residues 312-341 (GGGGGGAPRQATPVQAQPPPPPAVNRRLLR).

It belongs to the syntaxin family. Part of the t-SNARE complex.

It localises to the membrane. In terms of biological role, vesicle trafficking protein that functions in the secretory pathway. This Arabidopsis thaliana (Mouse-ear cress) protein is Syntaxin-122 (SYP122).